A 210-amino-acid polypeptide reads, in one-letter code: Glutathione S-transferase P 1 (210 aa).

One can recognise a GST N-terminal domain in the interval 1 to 80 (PEYTIIYFNA…LLARNHDLYG (80 aa)). Residues Y7, R13, W38, K44, 51–52 (QL), and 64–65 (QS) each bind glutathione. The GST C-terminal domain occupies 82–203 (NPREASLIDM…SSDAHKKRPI (122 aa)).

It belongs to the GST superfamily. Pi family. In terms of assembly, homodimer.

The protein localises to the cytoplasm. It localises to the mitochondrion. The protein resides in the nucleus. It carries out the reaction RX + glutathione = an S-substituted glutathione + a halide anion + H(+). Its function is as follows. Conjugation of reduced glutathione to a wide number of exogenous and endogenous hydrophobic electrophiles. In Bufo bufo (European toad), this protein is Glutathione S-transferase P 1.